The chain runs to 156 residues: Cyclic pyranopterin monophosphate synthase (156 aa).

Substrate-binding positions include 75-77 (LCH) and 111-112 (ME). D126 is an active-site residue.

It belongs to the MoaC family. In terms of assembly, homohexamer; trimer of dimers.

The enzyme catalyses (8S)-3',8-cyclo-7,8-dihydroguanosine 5'-triphosphate = cyclic pyranopterin phosphate + diphosphate. It participates in cofactor biosynthesis; molybdopterin biosynthesis. Its function is as follows. Catalyzes the conversion of (8S)-3',8-cyclo-7,8-dihydroguanosine 5'-triphosphate to cyclic pyranopterin monophosphate (cPMP). The protein is Cyclic pyranopterin monophosphate synthase of Caulobacter sp. (strain K31).